A 145-amino-acid chain; its full sequence is Protein SprT-like (145 aa).

One can recognise a SprT-like domain in the interval 5–141 (NYVKQVSVED…CGRCMGKLRL (137 aa)). A Zn(2+)-binding site is contributed by His64. The active site involves Glu65. His68 lines the Zn(2+) pocket.

It belongs to the SprT family. It depends on Zn(2+) as a cofactor.

The protein localises to the cytoplasm. The sequence is that of Protein SprT-like from Streptococcus sanguinis (strain SK36).